We begin with the raw amino-acid sequence, 306 residues long: Erythromycin 3''-O-methyltransferase (306 aa).

The S-adenosyl-L-methionine site is built by L157 and H162.

Belongs to the methyltransferase superfamily.

The enzyme catalyses erythromycin C + S-adenosyl-L-methionine = erythromycin A + S-adenosyl-L-homocysteine + H(+). The catalysed reaction is erythromycin D + S-adenosyl-L-methionine = erythromycin B + S-adenosyl-L-homocysteine + H(+). The protein operates within antibiotic biosynthesis; erythromycin biosynthesis. Functionally, S-adenosyl-L-methionine-dependent O-methyltransferase that catalyzes the last step in the erythromycin biosynthesis pathway. Methylates the position 3 of the mycarosyl moiety of erythromycin C, forming the most active form of the antibiotic, erythromycin A. Can also methylate the precursor erythromycin D, forming erythromycin B. The polypeptide is Erythromycin 3''-O-methyltransferase (eryG) (Saccharopolyspora erythraea (strain ATCC 11635 / DSM 40517 / JCM 4748 / NBRC 13426 / NCIMB 8594 / NRRL 2338)).